Here is an 802-residue protein sequence, read N- to C-terminus: Penicillin G acylase (802 aa).

The first 24 residues, 1–24 (MKTKWLISVIILFVFIFPQNLVFA), serve as a signal peptide directing secretion. A Ca(2+)-binding site is contributed by Glu-177. Residues 235-265 (SAVIKASEKVGKERENFVQTSEELGLPLKIG) constitute a propeptide, spacer peptide. Ser-266 (nucleophile) is an active-site residue. Residue Asp-341 participates in Ca(2+) binding.

Belongs to the peptidase S45 family. As to quaternary structure, heterodimer of an alpha subunit and a beta subunit processed from the same precursor. Requires Ca(2+) as cofactor.

It localises to the secreted. The enzyme catalyses a penicillin + H2O = 6-aminopenicillanate + a carboxylate. This chain is Penicillin G acylase (pac), found in Priestia megaterium (Bacillus megaterium).